The primary structure comprises 625 residues: tRNA uridine 5-carboxymethylaminomethyl modification enzyme MnmG (625 aa).

Residues 13-18, Val-125, and Ser-182 contribute to the FAD site; that span reads GGGHAG. An NAD(+)-binding site is contributed by 276-290; it reads GPRYCPSIEDKITRF. Gln-373 contacts FAD.

It belongs to the MnmG family. In terms of assembly, homodimer. Heterotetramer of two MnmE and two MnmG subunits. FAD serves as cofactor.

It localises to the cytoplasm. In terms of biological role, NAD-binding protein involved in the addition of a carboxymethylaminomethyl (cmnm) group at the wobble position (U34) of certain tRNAs, forming tRNA-cmnm(5)s(2)U34. The sequence is that of tRNA uridine 5-carboxymethylaminomethyl modification enzyme MnmG from Lactococcus lactis subsp. cremoris (strain SK11).